Here is a 168-residue protein sequence, read N- to C-terminus: Small ribosomal subunit protein uS5 (168 aa).

In terms of domain architecture, S5 DRBM spans 13–76 (LAEKLIAVNR…EKARRNMINV (64 aa)).

This sequence belongs to the universal ribosomal protein uS5 family. Part of the 30S ribosomal subunit. Contacts proteins S4 and S8.

Functionally, with S4 and S12 plays an important role in translational accuracy. Located at the back of the 30S subunit body where it stabilizes the conformation of the head with respect to the body. This chain is Small ribosomal subunit protein uS5, found in Pseudoalteromonas translucida (strain TAC 125).